We begin with the raw amino-acid sequence, 543 residues long: Phosphoribosylaminoimidazole carboxylase (543 aa).

The ATP-grasp domain occupies 110–297 (KEHLIKNGIA…QFEAHVRAIT (188 aa)). 137-192 (GAKYGFPYMLKSRTMAYDGRGNFVVKDKSYIPEALKVLDDRPLYAEKWAPFSKELA) serves as a coordination point for ATP.

The protein in the C-terminal section; belongs to the AIR carboxylase family. Class I subfamily.

It carries out the reaction 5-amino-1-(5-phospho-D-ribosyl)imidazole-4-carboxylate + H(+) = 5-amino-1-(5-phospho-beta-D-ribosyl)imidazole + CO2. The protein operates within purine metabolism; IMP biosynthesis via de novo pathway; 5-amino-1-(5-phospho-D-ribosyl)imidazole-4-carboxylate from 5-amino-1-(5-phospho-D-ribosyl)imidazole (carboxylase route): step 1/1. This chain is Phosphoribosylaminoimidazole carboxylase (ADE1), found in Ogataea methanolica (Yeast).